Reading from the N-terminus, the 63-residue chain is Ferredoxin (63 aa).

The 4Fe-4S ferredoxin-type domain maps to 3–31; that stretch reads WKVSVDVDTCIGDAICASLCPDVFEMGDD. Residues C12, D15, and C18 each coordinate [4Fe-4S] cluster. A disulfide bridge links C22 with C45. C53 serves as a coordination point for [4Fe-4S] cluster.

[4Fe-4S] cluster serves as cofactor. It depends on [3Fe-4S] cluster as a cofactor.

Functionally, ferredoxins are iron-sulfur proteins that transfer electrons in a wide variety of metabolic reactions. The chain is Ferredoxin (fdxA) from Thermococcus kodakarensis (strain ATCC BAA-918 / JCM 12380 / KOD1) (Pyrococcus kodakaraensis (strain KOD1)).